An 804-amino-acid chain; its full sequence is Tegument protein UL47 homolog (804 aa).

The span at 1–15 shows a compositional bias: basic residues; that stretch reads MQSGHYNRRQSRRQR. Disordered stretches follow at residues 1 to 42 and 58 to 206; these read MQSG…THPP and LNSE…DYFS. The short motif at 11 to 31 is the Nuclear localization signal element; it reads SRRQRISSNTTDSPRHTHGTR. Residues 32–42 are compositionally biased toward polar residues; it reads YRSTNWYTHPP. The segment covering 62–72 has biased composition (acidic residues); the sequence is MDQDSSSDASD. The segment covering 82–93 has biased composition (polar residues); it reads STYNGSEQNTST. Basic and acidic residues predominate over residues 94 to 109; it reads SRHENRIFKLTEREAN. 3 tandem repeats follow at residues 117–132, 133–148, and 149–164. Residues 117-203 are 6 X 16 AA approximate tandem repeats; sequence DAIDDEGEAE…IDDEGEAEED (87 aa). Residues 118–204 are compositionally biased toward acidic residues; sequence AIDDEGEAEE…DDEGEAEEDY (87 aa). Residues 170 to 180 form a 1-4; truncated repeat; sequence DAIDDEGEAEE. The 1-5; truncated repeat unit spans residues 181–191; sequence DAIDDEGEAEE. One copy of the 1-6; truncated repeat lies at 192-203; that stretch reads DAIDDEGEAEED. The Nuclear export signal motif lies at 770–792; that stretch reads QPIPSVDLAENLMQYRNEILGLD.

Belongs to the alphaherpesvirinae HHV-1 UL47 family. Interacts with US3 kinase. Interacts with ORF24 and ORF27; these interactions seem important for efficient virion nuclear egress. Interacts with ORF17/VHS. Post-translationally, phosphorylated by US3. This phosphorylation is required for proper nuclear localization.

It localises to the virion tegument. It is found in the host nucleus. Its subcellular location is the host cytoplasm. In terms of biological role, tegument protein that can bind to various RNA transcripts. Plays a role in the attenuation of selective viral and cellular mRNA degradation by modulating the activity of host shutoff RNase ORF17/VHS. Also plays a role in the primary envelopment of virions in the perinuclear space, probably by interacting with two nuclear egress proteins ORF24 and ORF27. In Varicella-zoster virus (strain Oka vaccine) (HHV-3), this protein is Tegument protein UL47 homolog.